Consider the following 150-residue polypeptide: Putative STAG3-like protein 4 (150 aa).

This sequence belongs to the SCC3 family.

In Homo sapiens (Human), this protein is Putative STAG3-like protein 4 (STAG3L4).